We begin with the raw amino-acid sequence, 388 residues long: Succinate--CoA ligase [ADP-forming] subunit beta (388 aa).

The ATP-grasp domain occupies 9–244; the sequence is KQLFARYGLP…PSQEDSREAH (236 aa). Residues Lys46, 53–55, Glu99, Thr102, and Glu107 contribute to the ATP site; that span reads GRG. Residues Asn199 and Asp213 each coordinate Mg(2+). Substrate is bound by residues Asn264 and 321–323; that span reads GIV.

It belongs to the succinate/malate CoA ligase beta subunit family. In terms of assembly, heterotetramer of two alpha and two beta subunits. Requires Mg(2+) as cofactor.

The enzyme catalyses succinate + ATP + CoA = succinyl-CoA + ADP + phosphate. It carries out the reaction GTP + succinate + CoA = succinyl-CoA + GDP + phosphate. The protein operates within carbohydrate metabolism; tricarboxylic acid cycle; succinate from succinyl-CoA (ligase route): step 1/1. Succinyl-CoA synthetase functions in the citric acid cycle (TCA), coupling the hydrolysis of succinyl-CoA to the synthesis of either ATP or GTP and thus represents the only step of substrate-level phosphorylation in the TCA. The beta subunit provides nucleotide specificity of the enzyme and binds the substrate succinate, while the binding sites for coenzyme A and phosphate are found in the alpha subunit. In Pectobacterium carotovorum subsp. carotovorum (strain PC1), this protein is Succinate--CoA ligase [ADP-forming] subunit beta.